Here is a 419-residue protein sequence, read N- to C-terminus: eIF5-mimic protein 1 (419 aa).

Residues 1–22 are disordered; the sequence is MNKHQKPVLTGQRFKTRKRDEK. Position 117 is an N6-acetyllysine (Lys117). A W2 domain is found at 248 to 415; it reads VQQSLGTRKE…QNAEEESESE (168 aa). Phosphoserine is present on residues Ser412, Ser414, and Ser419.

This sequence belongs to the BZW family. Interacts with EIF3E, EIF2S2 and EIF3C. As to expression, expressed at high levels in heart, and at lower levels in skeletal muscle, spleen and lung. Expressed at low levels in brain regions where nascent and immature neurons are present.

It localises to the cytoplasm. Its function is as follows. Translation initiation regulator which represses non-AUG initiated translation and repeat-associated non-AUG (RAN) initiated translation by acting as a competitive inhibitor of eukaryotic translation initiation factor 5 (EIF5) function. Increases the accuracy of translation initiation by impeding EIF5-dependent translation from non-AUG codons by competing with it for interaction with EIF2S2 within the 43S pre-initiation complex (PIC) in an EIF3C-binding dependent manner. This is eIF5-mimic protein 1 (Bzw2) from Rattus norvegicus (Rat).